A 348-amino-acid polypeptide reads, in one-letter code: Uroporphyrinogen decarboxylase (348 aa).

Residues 23 to 27, D72, Y148, S203, and H316 contribute to the substrate site; that span reads RQAGR.

The protein belongs to the uroporphyrinogen decarboxylase family. Homodimer.

Its subcellular location is the cytoplasm. The enzyme catalyses uroporphyrinogen III + 4 H(+) = coproporphyrinogen III + 4 CO2. It functions in the pathway porphyrin-containing compound metabolism; protoporphyrin-IX biosynthesis; coproporphyrinogen-III from 5-aminolevulinate: step 4/4. In terms of biological role, catalyzes the decarboxylation of four acetate groups of uroporphyrinogen-III to yield coproporphyrinogen-III. This chain is Uroporphyrinogen decarboxylase, found in Myxococcus xanthus (strain DK1622).